The sequence spans 922 residues: Lysine-specific demethylase 4 (922 aa).

The span at 1–15 (MASAATTTHFPSSRI) shows a compositional bias: polar residues. Disordered stretches follow at residues 1–21 (MASA…EPCA) and 42–61 (SSSC…MFTD). The JmjN domain maps to 87 to 130 (VLTFYPTMREFKNFSQYIKKIEQNGGHLKAGIAKIVAPEGWTPR). Y213 contributes to the 2-oxoglutarate binding site. Residues 223-388 (DAQVEEWNMN…YGKDAVLCDC (166 aa)) form the JmjC domain. H265 and E267 together coordinate Fe cation. 2-oxoglutarate contacts are provided by N275 and K283. Zn(2+)-binding residues include C314 and H320. 2-oxoglutarate is bound at residue K321. H356 serves as a coordination point for Fe cation. C386 and C388 together coordinate Zn(2+). Residues 435-475 (KRRQSLADASKIAKRARLGASSTATDSDGSSGSSGSEEATE) form a disordered region. The span at 453 to 475 (GASSTATDSDGSSGSSGSEEATE) shows a compositional bias: low complexity. The C2HC pre-PHD-type zinc-finger motif lies at 639–675 (TTSCQLCELRGGALIPCQIGTDSTWAHVACALFNRRA). The segment at 723 to 783 (WECVVCHRTD…GVVMICHKHE (61 aa)) adopts a PHD-type; degenerate zinc-finger fold.

Belongs to the JHDM3 histone demethylase family. The cofactor is Fe(2+).

The protein localises to the nucleus. The enzyme catalyses N(6),N(6),N(6)-trimethyl-L-lysyl(9)-[histone H3] + 2 2-oxoglutarate + 2 O2 = N(6)-methyl-L-lysyl(9)-[histone H3] + 2 formaldehyde + 2 succinate + 2 CO2. It catalyses the reaction N(6),N(6),N(6)-trimethyl-L-lysyl(36)-[histone H3] + 2 2-oxoglutarate + 2 O2 = N(6)-methyl-L-lysyl(36)-[histone H3] + 2 formaldehyde + 2 succinate + 2 CO2. Histone demethylase that specifically demethylates 'Lys-9' and 'Lys-36' residues of histone H3, thereby playing a central role in histone code. Demethylation of Lys residue generates formaldehyde and succinate. Involved in the negative regulation of lifespan in a germline-dependent fashion. This is Lysine-specific demethylase 4 (jmjd-2) from Caenorhabditis elegans.